We begin with the raw amino-acid sequence, 261 residues long: Urease accessory protein UreD (261 aa).

The protein belongs to the UreD family. In terms of assembly, ureD, UreF and UreG form a complex that acts as a GTP-hydrolysis-dependent molecular chaperone, activating the urease apoprotein by helping to assemble the nickel containing metallocenter of UreC. The UreE protein probably delivers the nickel.

The protein resides in the cytoplasm. Functionally, required for maturation of urease via the functional incorporation of the urease nickel metallocenter. The chain is Urease accessory protein UreD from Haemophilus influenzae (strain ATCC 51907 / DSM 11121 / KW20 / Rd).